A 158-amino-acid chain; its full sequence is NAD(P)H-quinone oxidoreductase subunit N (158 aa).

Belongs to the complex I NdhN subunit family. NDH-1 can be composed of about 15 different subunits; different subcomplexes with different compositions have been identified which probably have different functions.

Its subcellular location is the cellular thylakoid membrane. It carries out the reaction a plastoquinone + NADH + (n+1) H(+)(in) = a plastoquinol + NAD(+) + n H(+)(out). It catalyses the reaction a plastoquinone + NADPH + (n+1) H(+)(in) = a plastoquinol + NADP(+) + n H(+)(out). In terms of biological role, NDH-1 shuttles electrons from an unknown electron donor, via FMN and iron-sulfur (Fe-S) centers, to quinones in the respiratory and/or the photosynthetic chain. The immediate electron acceptor for the enzyme in this species is believed to be plastoquinone. Couples the redox reaction to proton translocation, and thus conserves the redox energy in a proton gradient. Cyanobacterial NDH-1 also plays a role in inorganic carbon-concentration. This is NAD(P)H-quinone oxidoreductase subunit N from Prochlorococcus marinus (strain AS9601).